The chain runs to 1187 residues: Tyrosine-protein phosphatase non-receptor type 14 (1187 aa).

The FERM domain maps to 21 to 306 (FVTRIRLLDS…TRHKFYKQNK (286 aa)). S314, S461, and S486 each carry phosphoserine. Positions 510-524 (LVSPSDQRNPKNNVV) are enriched in polar residues. The disordered stretch occupies residues 510-531 (LVSPSDQRNPKNNVVPSKPGAS). S591, S593, S594, and S642 each carry phosphoserine. Disordered regions lie at residues 671–690 (LREQ…PQLP) and 787–824 (KAIS…KKEP). Positions 815–824 (SVKERVKKEP) are enriched in basic and acidic residues. S831 carries the post-translational modification Phosphoserine. A Tyrosine-protein phosphatase domain is found at 909-1180 (VFTEYEQIPK…KFVYQVLIQF (272 aa)). Substrate-binding positions include D1079, 1121–1127 (CSAGVGR), and Q1165. C1121 acts as the Phosphocysteine intermediate in catalysis.

It belongs to the protein-tyrosine phosphatase family. Non-receptor class subfamily. As to quaternary structure, interacts with FLT4; the interaction is enhanced by stimulation with VEGFC. Interacts (via PPxY motifs) with YAP1 (via WW domains); this interaction leads to the cytoplasmic sequestration of YAP1 and inhibits its transcriptional co-activator activity. Ubiquitinated by the ECS (Elongin BC-CUL2/5-SOCS-box protein)/LRR1 E3 ligase complex and subsequently targeted to proteasomal degradation. In terms of tissue distribution, ubiquitous.

Its subcellular location is the cytoplasm. It is found in the cytoskeleton. The protein localises to the nucleus. It catalyses the reaction O-phospho-L-tyrosyl-[protein] + H2O = L-tyrosyl-[protein] + phosphate. In terms of biological role, protein tyrosine phosphatase which may play a role in the regulation of lymphangiogenesis, cell-cell adhesion, cell-matrix adhesion, cell migration, cell growth and also regulates TGF-beta gene expression, thereby modulating epithelial-mesenchymal transition. Mediates beta-catenin dephosphorylation at adhesion junctions. Acts as a negative regulator of the oncogenic property of YAP, a downstream target of the hippo pathway, in a cell density-dependent manner. May function as a tumor suppressor. The protein is Tyrosine-protein phosphatase non-receptor type 14 (PTPN14) of Homo sapiens (Human).